Here is an 80-residue protein sequence, read N- to C-terminus: U19-lycotoxin-Ls1b (80 aa).

A signal peptide spans 1–22; the sequence is MSPKVQALIFIVGLITLLAAHA. The propeptide occupies 23 to 34; that stretch reads QEELSDNIESER. Cystine bridges form between Cys-36/Cys-50, Cys-43/Cys-55, Cys-49/Cys-66, and Cys-57/Cys-64.

It belongs to the neurotoxin 02 (plectoxin) family. 05 (U19-lycotoxin) subfamily. In terms of tissue distribution, expressed by the venom gland.

It localises to the secreted. The protein is U19-lycotoxin-Ls1b of Lycosa singoriensis (Wolf spider).